A 130-amino-acid chain; its full sequence is MSLMDPLANALNHVSNCESVGKNVAYLKPASKLIGRVLNVMQDQGYIGNFEYIEDGKAGVYKVDLIGQINKCGAVKPRYAVKNHDFEKFEKRYLPAKGFGLLIVSTPKGLMTHDEARNAGVGGRLISYIY.

Belongs to the universal ribosomal protein uS8 family. As to quaternary structure, part of the 30S ribosomal subunit.

Its function is as follows. One of the primary rRNA binding proteins, it binds directly to 16S rRNA central domain where it helps coordinate assembly of the platform of the 30S subunit. In Methanococcus maripaludis (strain C5 / ATCC BAA-1333), this protein is Small ribosomal subunit protein uS8.